We begin with the raw amino-acid sequence, 151 residues long: 3-hydroxyacyl-[acyl-carrier-protein] dehydratase FabZ (151 aa).

The active site involves H54.

This sequence belongs to the thioester dehydratase family. FabZ subfamily.

It is found in the cytoplasm. It catalyses the reaction a (3R)-hydroxyacyl-[ACP] = a (2E)-enoyl-[ACP] + H2O. Involved in unsaturated fatty acids biosynthesis. Catalyzes the dehydration of short chain beta-hydroxyacyl-ACPs and long chain saturated and unsaturated beta-hydroxyacyl-ACPs. This is 3-hydroxyacyl-[acyl-carrier-protein] dehydratase FabZ from Klebsiella pneumoniae (strain 342).